We begin with the raw amino-acid sequence, 1045 residues long: Tyrosine-protein kinase-like otk (1045 aa).

A signal peptide spans 1–25 (MPIVMDMNMLLMLSLAFTVMAPASA). Ig-like C2-type domains are found at residues 26–116 (SSSR…AKLS), 115–200 (LSVI…RVMS), 260–373 (PEGL…APVN), 376–469 (PGAL…VAIN), and 474–564 (PRFS…VRLL). Topologically, residues 26 to 587 (SSSRFTQPPQ…AGDGFLVTRA (562 aa)) are extracellular. Cystine bridges form between Cys-49/Cys-97, Cys-139/Cys-189, Cys-285/Cys-362, and Cys-406/Cys-453. N-linked (GlcNAc...) asparagine glycosylation is found at Asn-344, Asn-424, Asn-435, Asn-442, Asn-450, Asn-463, Asn-518, and Asn-530. Cys-496 and Cys-548 are joined by a disulfide. A helical membrane pass occupies residues 588–608 (VLITMTVALAYIVLVVGLMLW). The Cytoplasmic portion of the chain corresponds to 609–1045 (CRYRRQARKA…LSKAMQAAEK (437 aa)). Residues 628–676 (AGGDQAESGKNTEQEPCLSKQRNGHGKSRTAANGDAQKSDDTACSQQSK) form a disordered region. Ser-681 carries the post-translational modification Phosphoserine. In terms of domain architecture, Protein kinase; inactive spans 695-1040 (LSELIQIGRG…QLGAALSKAM (346 aa)). Residues 722–790 (ASPSDKDADT…QPQEQAQSES (69 aa)) are disordered. The segment covering 725 to 736 (SDKDADTEKQHS) has biased composition (basic and acidic residues). The span at 743 to 752 (GASGASGCGS) shows a compositional bias: gly residues. Positions 771-782 (DDIEEIKEEEQP) are enriched in acidic residues.

This sequence belongs to the protein kinase superfamily. Tyr protein kinase family. Insulin receptor subfamily. As to quaternary structure, interacts with plexA; component of a receptor complex that mediates the repulsive signaling in response to Semaphorin ligands.

Its subcellular location is the cell membrane. Its function is as follows. Acts as a calcium-dependent, homophilic cell adhesion molecule that regulates neural recognition during the development of the nervous system. Component of the repulsive Plexin signaling response to regulate motor axon guidance at the embryonic stage. Also component of a receptor complex that is required in the adult visual system to innervate the lamina layer; specific targeting of R1-R6 axons. This chain is Tyrosine-protein kinase-like otk, found in Drosophila mojavensis (Fruit fly).